The following is a 77-amino-acid chain: Large ribosomal subunit protein bL28 (77 aa).

The protein belongs to the bacterial ribosomal protein bL28 family.

The sequence is that of Large ribosomal subunit protein bL28 from Ralstonia nicotianae (strain ATCC BAA-1114 / GMI1000) (Ralstonia solanacearum).